Consider the following 443-residue polypeptide: Threonine/serine transporter TdcC (443 aa).

Transmembrane regions (helical) follow at residues threonine 22–isoleucine 42, alanine 44–phenylalanine 64, glycine 97–valine 117, phenylalanine 140–methionine 160, valine 163–isoleucine 183, isoleucine 207–isoleucine 227, methionine 261–alanine 281, phenylalanine 311–phenylalanine 331, isoleucine 366–leucine 386, isoleucine 389–isoleucine 409, and aspartate 423–phenylalanine 443.

Belongs to the amino acid/polyamine transporter 2 family. SdaC/TdcC subfamily.

The protein resides in the cell inner membrane. It catalyses the reaction L-threonine(in) + H(+)(in) = L-threonine(out) + H(+)(out). It carries out the reaction L-serine(in) + H(+)(in) = L-serine(out) + H(+)(out). Involved in the import of threonine and serine into the cell, with the concomitant import of a proton (symport system). In Shigella boydii serotype 18 (strain CDC 3083-94 / BS512), this protein is Threonine/serine transporter TdcC.